The sequence spans 95 residues: MALKPLGDRIVVHFEETEEKTASGFVLAGASHEATKTAEVLAVGEGIRTLTGELIALSVAAGDKVLVENGAGVNVKDGDDSVSIIREADILAVLA.

Belongs to the GroES chaperonin family. In terms of assembly, heptamer of 7 subunits arranged in a ring. Interacts with the chaperonin GroEL.

Its subcellular location is the cytoplasm. Its function is as follows. Together with the chaperonin GroEL, plays an essential role in assisting protein folding. The GroEL-GroES system forms a nano-cage that allows encapsulation of the non-native substrate proteins and provides a physical environment optimized to promote and accelerate protein folding. GroES binds to the apical surface of the GroEL ring, thereby capping the opening of the GroEL channel. The protein is Co-chaperonin GroES of Streptococcus salivarius.